Reading from the N-terminus, the 372-residue chain is MENFAEKKISKPLTFGEGIQYVLDRISIKPEDRQTFKEDAQQIQNEFVRAISKQDPYFASAFRGLALTGSSLDNVRINLPDEFDMLTKIKMPCKLEPVPIRSHPGYVFLRASGDNIPIHLVDRWEDEYCIDRLKVQAWFRDNITAVIPELSNIRCNDGRSYELVNKTIGDVAHTIQAKCLSDPDRSISFDFVPAFEFSASEWPRIFPQHRNEDRSWYAVPSEFKYPNVGDDPLSFLVCAPYWERMVLTKKQHLKDGYRLMKAMRDANDMPKIYSYTIKSVFLNASNVNKLINWNQSPGRILIRAIDLLAMFLRKGKLPSYLVPDRNMLDRLSVDMRQDYRRKLCHIFRRLIRCRDRDCMTSEDLQFIFGMRY.

Residue T68 participates in GTP binding. ATP-binding positions include S70 and 82–84; that span reads EFD. E82, D84, and D190 together coordinate Mg(2+). GTP is bound by residues D190 and 236–243; that span reads LVCAPYWE. Residues 240 to 243, K261, and 274 to 278 contribute to the ATP site; these read PYWE and SYTIK.

Belongs to the mab-21 family. Requires Mg(2+) as cofactor. It depends on Mn(2+) as a cofactor.

The catalysed reaction is GTP + ATP = 3',2'-cGAMP + 2 diphosphate. It catalyses the reaction GTP + ATP = pppA(2'-5')pG + diphosphate. It carries out the reaction pppA(2'-5')pG = 3',2'-cGAMP + diphosphate. With respect to regulation, the enzyme activity is specifically activated by double-stranded RNA (dsRNA). Functionally, nucleotidyltransferase that catalyzes the formation of cyclic GMP-AMP (3',2'-cGAMP) from ATP and GTP and plays a key role in innate immunity. Synthesizes 3',2'-cGAMP in a two-step reaction through production of the linear intermediate pppA(2'-5')pG. Acts as a key sensor of double-stranded RNA (dsRNA), the presence of dsRNA in the cytoplasm being a danger signal that triggers the immune responses. Directly binds dsRNA longer than 15 bp, activating the nucleotidyltransferase activity, leading to synthesis of 3',2'-cGAMP, a second messenger that binds to and activates Sting, thereby triggering the antiviral immune response via activation of the NF-kappa-B transcription factor Rel (Relish). The polypeptide is Cyclic GMP-AMP synthase-like receptor (Drosophila eugracilis (Fruit fly)).